The sequence spans 177 residues: Large ribosomal subunit protein uL6 (177 aa).

The protein belongs to the universal ribosomal protein uL6 family. In terms of assembly, part of the 50S ribosomal subunit.

Its function is as follows. This protein binds to the 23S rRNA, and is important in its secondary structure. It is located near the subunit interface in the base of the L7/L12 stalk, and near the tRNA binding site of the peptidyltransferase center. The chain is Large ribosomal subunit protein uL6 from Pseudomonas fluorescens (strain ATCC BAA-477 / NRRL B-23932 / Pf-5).